The sequence spans 410 residues: Argininosuccinate synthase (410 aa).

Residues 13-21 (AYSGGLDTS) and Ala-40 each bind ATP. Residues Tyr-91 and Ser-96 each contribute to the L-citrulline site. Gly-121 serves as a coordination point for ATP. L-aspartate contacts are provided by Thr-123, Asn-127, and Asp-128. Asn-127 is a binding site for L-citrulline. Positions 131, 182, 191, 267, and 279 each coordinate L-citrulline.

Belongs to the argininosuccinate synthase family. Type 1 subfamily. In terms of assembly, homotetramer.

It is found in the cytoplasm. It catalyses the reaction L-citrulline + L-aspartate + ATP = 2-(N(omega)-L-arginino)succinate + AMP + diphosphate + H(+). The protein operates within amino-acid biosynthesis; L-arginine biosynthesis; L-arginine from L-ornithine and carbamoyl phosphate: step 2/3. This chain is Argininosuccinate synthase, found in Gluconobacter oxydans (strain 621H) (Gluconobacter suboxydans).